Here is a 267-residue protein sequence, read N- to C-terminus: Acetyl-coenzyme A carboxylase carboxyl transferase subunit beta 1 (267 aa).

Positions 9 to 267 (TWQACPKCGR…NYGIGRSAHG (259 aa)) constitute a CoA carboxyltransferase N-terminal domain. Positions 13, 16, 31, and 34 each coordinate Zn(2+). The C4-type zinc finger occupies 13-34 (CPKCGRHVHQRQWGTYQQCPYC).

Belongs to the AccD/PCCB family. Acetyl-CoA carboxylase is a heterohexamer composed of biotin carboxyl carrier protein (AccB), biotin carboxylase (AccC) and two subunits each of ACCase subunit alpha (AccA) and ACCase subunit beta (AccD). It depends on Zn(2+) as a cofactor.

The protein resides in the cytoplasm. It carries out the reaction N(6)-carboxybiotinyl-L-lysyl-[protein] + acetyl-CoA = N(6)-biotinyl-L-lysyl-[protein] + malonyl-CoA. It participates in lipid metabolism; malonyl-CoA biosynthesis; malonyl-CoA from acetyl-CoA: step 1/1. Functionally, component of the acetyl coenzyme A carboxylase (ACC) complex. Biotin carboxylase (BC) catalyzes the carboxylation of biotin on its carrier protein (BCCP) and then the CO(2) group is transferred by the transcarboxylase to acetyl-CoA to form malonyl-CoA. This chain is Acetyl-coenzyme A carboxylase carboxyl transferase subunit beta 1, found in Lactiplantibacillus plantarum (strain JDM1) (Lactobacillus plantarum).